The following is a 401-amino-acid chain: Methionyl-tRNA formyltransferase, mitochondrial (401 aa).

The N-terminal 26 residues, M1–P26, are a transit peptide targeting the mitochondrion. (6R)-10-formyltetrahydrofolate contacts are provided by residues Y18–S20 and V66–S70.

Belongs to the Fmt family. Post-translationally, phosphorylated by GCN2 in response to nutrient deprivation. Phosphorylation mediates retention of FMT1 in the cytoplasm.

It localises to the mitochondrion. Its subcellular location is the mitochondrion matrix. The protein resides in the cytoplasm. The enzyme catalyses L-methionyl-tRNA(fMet) + (6R)-10-formyltetrahydrofolate = N-formyl-L-methionyl-tRNA(fMet) + (6S)-5,6,7,8-tetrahydrofolate + H(+). Its function is as follows. Formylates methionyl-tRNA in mitochondria and the cytoplasm. Responsible for the formylation of the 8 N-terminally formylated (Nt-formylated) mitochondrial matrix proteins that are encoded by mitochondrial DNA. Nt-formylated proteins in the cytoplasm are strongly up-regulated in stationary phase or upon starvation for specific amino acids (His or Lys) and are targeted for degradation by a PSH1 E3 ubiquitin ligase-mediated fMet/N-end rule pathway. Increased Nt-formylation of cytosolic proteins appears to be important for adaptation to these stresses. Stationary phase-degraded Nt-formylated proteins include histone H3-like centromeric protein CSE4, Mediator complex subunit 3 (PGD1) and small ribosomal subunit protein uS8-A (RPS22A). In Saccharomyces cerevisiae (strain ATCC 204508 / S288c) (Baker's yeast), this protein is Methionyl-tRNA formyltransferase, mitochondrial (FMT1).